Reading from the N-terminus, the 414-residue chain is MVLGKVKSLTISFDCLNDSNVPVYSSGDTVSGRVNLEVTGEIRVKSLKIHARGHAKVRWTESRNAGSNTAYTQNYTEEVEYFNHKDILIGHERDDDNSEEGFNTIHSGRHEYAFSFELPQTPLATSFEGRHGSVRYWVKAELHRPWLLPVKLKKEFTVFEHIDINTPSLLSPQAGTKEKTLYCWFCTSGPISLSAKIERKGYTPGESIQIFAEIENCSSRMVVPKAAIYQTQAFYAKGKMKEVKQLVANLRGESLSSGKTETWNGKLLKIPPVSPSILDCSIIRVEYSLMVYVDIPGAMDLFLNLPLVIGTIPLHPFGSRTSSVSSQCSMNMNWLGLSLPERPEAPPSYAEVVTEEQRRNNLAPGSACDDFERALQGPLFAYIQEFRFLPPPLYSEIDPNPDQPADDRPSCPSR.

2 consecutive short sequence motifs (PPxY motif) follow at residues 346-349 and 391-394; these read PPSY and PPLY. Residues 393-414 form a disordered region; the sequence is LYSEIDPNPDQPADDRPSCPSR. A compositionally biased stretch (basic and acidic residues) spans 405–414; sequence ADDRPSCPSR.

This sequence belongs to the arrestin family. In terms of assembly, interacts (via PPxY motifs) with NEDD4 (via WW domains). Interacts with ADRB2. Interacts with ADRB3. Interacts with HGS (via PPxY motifs). Does not bind TXN (thioredoxin). Interacts with ITCH.

It is found in the cytoplasm. It localises to the cell membrane. The protein resides in the lysosome. The protein localises to the endosome. Its subcellular location is the early endosome. Adapter protein that plays a role in regulating cell-surface expression of adrenergic receptors and probably also other G protein-coupled receptors. Plays a role in NEDD4-mediated ubiquitination and endocytosis af activated ADRB2 and subsequent ADRB2 degradation. May recruit NEDD4 to ADRB2. Alternatively, may function as adapter protein that does not play a major role in recruiting NEDD4 to ADRB2, but rather plays a role in a targeting ADRB2 to endosomes. The polypeptide is Arrestin domain-containing protein 3 (ARRDC3) (Bos taurus (Bovine)).